Here is a 206-residue protein sequence, read N- to C-terminus: Small ribosomal subunit protein uS4 (206 aa).

Over residues 25–39 the composition is skewed to basic and acidic residues; the sequence is DKLLDRKPNGPGKER. Residues 25 to 49 are disordered; that stretch reads DKLLDRKPNGPGKERGARKRGKTSV. Residues 95–157 form the S4 RNA-binding domain; it reads QRLDNTIYRM…KGIQNLIRHN (63 aa).

It belongs to the universal ribosomal protein uS4 family. As to quaternary structure, part of the 30S ribosomal subunit. Contacts protein S5. The interaction surface between S4 and S5 is involved in control of translational fidelity.

One of the primary rRNA binding proteins, it binds directly to 16S rRNA where it nucleates assembly of the body of the 30S subunit. Functionally, with S5 and S12 plays an important role in translational accuracy. The protein is Small ribosomal subunit protein uS4 of Treponema denticola (strain ATCC 35405 / DSM 14222 / CIP 103919 / JCM 8153 / KCTC 15104).